The sequence spans 495 residues: Adenosylhomocysteinase (495 aa).

Substrate contacts are provided by T71, D156, and E218. 219-221 (TTT) serves as a coordination point for NAD(+). Residues K248 and D252 each contribute to the substrate site. NAD(+) contacts are provided by residues N253, 282-287 (GYGDVG), E305, N340, 361-363 (IGH), and N409.

This sequence belongs to the adenosylhomocysteinase family. The cofactor is NAD(+).

It localises to the cytoplasm. It carries out the reaction S-adenosyl-L-homocysteine + H2O = L-homocysteine + adenosine. It participates in amino-acid biosynthesis; L-homocysteine biosynthesis; L-homocysteine from S-adenosyl-L-homocysteine: step 1/1. May play a key role in the regulation of the intracellular concentration of adenosylhomocysteine. The chain is Adenosylhomocysteinase from Mycobacterium tuberculosis (strain ATCC 25177 / H37Ra).